Here is a 509-residue protein sequence, read N- to C-terminus: Maturase K (509 aa).

This sequence belongs to the intron maturase 2 family. MatK subfamily.

It is found in the plastid. The protein localises to the chloroplast. Usually encoded in the trnK tRNA gene intron. Probably assists in splicing its own and other chloroplast group II introns. The sequence is that of Maturase K from Jacaranda mimosifolia (Jacaranda).